The sequence spans 385 residues: tRNA pseudouridine synthase D (385 aa).

The Nucleophile role is filled by Asp86. Positions 165 to 305 (GFPNYFGNQR…TRFLQKDIAP (141 aa)) constitute a TRUD domain.

It belongs to the pseudouridine synthase TruD family.

The catalysed reaction is uridine(13) in tRNA = pseudouridine(13) in tRNA. Functionally, responsible for synthesis of pseudouridine from uracil-13 in transfer RNAs. The sequence is that of tRNA pseudouridine synthase D from Helicobacter hepaticus (strain ATCC 51449 / 3B1).